Here is a 636-residue protein sequence, read N- to C-terminus: Protein BCAP (636 aa).

Coiled-coil stretches lie at residues 36 to 97 (LSCL…EQKE), 141 to 220 (ESEN…WNLQ), 249 to 325 (YKQR…HGKN), 377 to 484 (ISSE…ECQE), and 519 to 631 (LEEE…KMNS).

Belongs to the ODF2 family. Mainly expressed in trachea and testis. Not detected in bone marrow, bladder, leukocytes. Only weakly detected in tongue, stomach, brain and ovaries.

Its subcellular location is the cytoplasm. The protein localises to the cytoskeleton. The protein resides in the microtubule organizing center. It localises to the centrosome. It is found in the centriole. Its subcellular location is the centriolar satellite. The protein localises to the cilium basal body. Its function is as follows. Acts as a suppressor of ciliogenesis, specifically, the initiation of ciliogenesis. In Homo sapiens (Human), this protein is Protein BCAP.